The primary structure comprises 337 residues: Quercetin 2,3-dioxygenase (337 aa).

2 consecutive Cupin type-2 domains span residues 55–110 (KGDA…MQSH) and 226–281 (PKGD…RLDS). Fe cation contacts are provided by histidine 62, histidine 64, glutamate 69, histidine 103, histidine 234, histidine 236, glutamate 241, and histidine 275.

As to quaternary structure, homodimer. Fe(2+) serves as cofactor.

It carries out the reaction quercetin + O2 = 2-(3,4-dihydroxybenzoyloxy)-4,6-dihydroxybenzoate + CO. Its pathway is flavonoid metabolism; quercetin degradation. Functionally, performs the first step in the degradation of the flavonoid quercetin by a dioxygenase reaction. The enzyme catalyzes the cleavage of the O-heteroaromatic ring of the flavonol quercetin yielding the depside 2-protocatechuoyl-phloroglucinol carboxylic acid and carbon monoxide. This involves the remarkable dioxygenolytic cleavage of two carbon-carbon bonds. This chain is Quercetin 2,3-dioxygenase (qdoI), found in Bacillus subtilis (strain 168).